Reading from the N-terminus, the 930-residue chain is MEIATRCEVGAMRGPSSDSVSHDIPQPQSPPSVKIRKTAFKFFGGRKSICVLPSFFGGRGRSQRKGSSKTGVTKSQTYDGVSRACWDDLGRSSSEVASGDFEFCSEPQKSQEDHGKSQSLPRQRRGLRGLFSSIRRHRKNKNVEVEKREALEMSSSFHAKTVPGALPSVSDRGDYHGDSQGEELVPDVPNQTTGSECELPLAATECTIDVTLVPEKRRSRVEMDKRRRAEEEGIGEDEKTGRQEGLMTYHQPLSAESELDRLAEQNVDVPDGEPPVASCSSENLVFGDVSSLKSFDSLTGCGDIIADQDDVSVAESSVSADRGSRNAGKRSSCFVTYQGGGEEMATPDEIDADYLQSLWESETSNEVCYIPSDRGSDSPSLTPDQQLSSIRATSSSSPMGITETALTPADLLSPQSDRQESVPNSDEGYYDSTTPGMEEESRERPHQERLPRDSYSGDALYELFEPDDRLLSPSLPPKDAHSFVGAPLQADKSPTNPLYSLASTAIETGAMETEEERLSKIQHALLCCELQNLRSPSKNQLLFHSDCFYDDSNLPVDDSKQDLQEVINQRYPQSPPRSQAVKEGVPRIRGQVQESSLFAPCADSVLNPQVIETTRPQPQSDDQGSLRPSRGCSQSQEELMVCFSQALVDFTKNTRLYRNSTESLDGSESSSPFGPSLRALPAIVTFDVVDMENEGECEQQTDLAEEEEELASPYEPFEDDGCYLQQDAFAECDQRTFDAYEQSLLLSNAWGIASLPRHLSLGRPCPPVPAPLALNRRSRSLDTDSLEFQTSEIYTSVTKYDSKGTAFSQSRTVDCNDMDFPRQPCRITVDSWRRGYRQNFDSSNASQQELKLPHLSQSTVRPSHLPLKNNCRSRNLPAATRVDGEGEILFGGGDALYPCSYPPMGTQWKNRPVGVTQGVPHLRSEQSADH.

Disordered regions lie at residues 1–33 (MEIA…PPSV), 55–76 (FFGG…TKSQ), 104–133 (CSEP…LFSS), 161–193 (TVPG…NQTT), 222–245 (EMDK…RQEG), and 366–454 (EVCY…PRDS). Residues 222 to 242 (EMDKRRRAEEEGIGEDEKTGR) show a composition bias toward basic and acidic residues. Composition is skewed to polar residues over residues 377–399 (DSPS…SSPM) and 413–424 (SPQSDRQESVPN). The segment covering 439–452 (EESRERPHQERLPR) has biased composition (basic and acidic residues).

Belongs to the Amer family.

Its subcellular location is the cytoplasm. It is found in the cell membrane. It localises to the nucleus. In terms of biological role, regulator of the canonical Wnt signaling pathway. Acts by specifically binding phosphatidylinositol 4,5-bisphosphate (PtdIns(4,5)P2), translocating to the cell membrane and interacting with key regulators of the canonical Wnt signaling pathway, such as components of the beta-catenin destruction complex. Acts both as a positive and negative regulator of the Wnt signaling pathway, depending on the context. The chain is APC membrane recruitment protein 1 (amer1) from Danio rerio (Zebrafish).